A 506-amino-acid polypeptide reads, in one-letter code: Maturase K (506 aa).

It belongs to the intron maturase 2 family. MatK subfamily.

The protein resides in the plastid. Its subcellular location is the chloroplast. Usually encoded in the trnK tRNA gene intron. Probably assists in splicing its own and other chloroplast group II introns. The chain is Maturase K from Melilotus indicus (Sourclover).